Consider the following 584-residue polypeptide: 2-succinyl-5-enolpyruvyl-6-hydroxy-3-cyclohexene-1-carboxylate synthase (584 aa).

It belongs to the TPP enzyme family. MenD subfamily. Homodimer. Requires Mg(2+) as cofactor. It depends on Mn(2+) as a cofactor. Thiamine diphosphate is required as a cofactor.

It catalyses the reaction isochorismate + 2-oxoglutarate + H(+) = 5-enolpyruvoyl-6-hydroxy-2-succinyl-cyclohex-3-ene-1-carboxylate + CO2. It functions in the pathway quinol/quinone metabolism; 1,4-dihydroxy-2-naphthoate biosynthesis; 1,4-dihydroxy-2-naphthoate from chorismate: step 2/7. Its pathway is quinol/quinone metabolism; menaquinone biosynthesis. Functionally, catalyzes the thiamine diphosphate-dependent decarboxylation of 2-oxoglutarate and the subsequent addition of the resulting succinic semialdehyde-thiamine pyrophosphate anion to isochorismate to yield 2-succinyl-5-enolpyruvyl-6-hydroxy-3-cyclohexene-1-carboxylate (SEPHCHC). This chain is 2-succinyl-5-enolpyruvyl-6-hydroxy-3-cyclohexene-1-carboxylate synthase, found in Bacillus cereus (strain ZK / E33L).